The following is a 280-amino-acid chain: Phosphonates import ATP-binding protein PhnC 1 (280 aa).

The ABC transporter domain occupies 2–246; it reads LRIENLDKRY…VLTRIYGEED (245 aa). 35–42 provides a ligand contact to ATP; that stretch reads GPSGAGKS. The segment at 247-266 is disordered; sequence WSKTSDEDADSVDAPPRAAD.

This sequence belongs to the ABC transporter superfamily. Phosphonates importer (TC 3.A.1.9.1) family. In terms of assembly, the complex is composed of two ATP-binding proteins (PhnC), two transmembrane proteins (PhnE) and a solute-binding protein (PhnD).

The protein localises to the cell inner membrane. The catalysed reaction is phosphonate(out) + ATP + H2O = phosphonate(in) + ADP + phosphate + H(+). Its function is as follows. Part of the ABC transporter complex PhnCDE involved in phosphonates import. Responsible for energy coupling to the transport system. The protein is Phosphonates import ATP-binding protein PhnC 1 of Rhodopseudomonas palustris (strain HaA2).